A 37-amino-acid chain; its full sequence is Large ribosomal subunit protein bL36A (37 aa).

It belongs to the bacterial ribosomal protein bL36 family.

The protein is Large ribosomal subunit protein bL36A of Arthrobacter sp. (strain FB24).